A 321-amino-acid polypeptide reads, in one-letter code: MSYRLLSVDKDELVTSPCLKERNYLGLSDCSSVDSSTIPNVVGKSNLNFKATELRLGLPESQSPERETDFGLLSPRTPDEKLLFPLLPSKDNGSATTGHKNVVSGNKRGFADTWDEFSGVKGSVRPGGGINMMLSPKVKDVSKSIQEERSHAKGGLNNAPAAKAQVVGWPPIRSYRKNTMASSTSKNTDEVDGKPGLGVLFVKVSMDGAPYLRKVDLRTYTSYQQLSSALEKMFSCFTLGQCGLHGAQGRERMSEIKLKDLLHGSEFVLTYEDKDGDWMLVGDVPWEIFTETCQKLKIMKGSDSIGLAPGAVEKSKNKERV.

Positions 54–58 match the EAR-like (transcriptional repression) motif; it reads LRLGL. One can recognise a PB1 domain in the interval 199–301; the sequence is VLFVKVSMDG…TCQKLKIMKG (103 aa).

It belongs to the Aux/IAA family. Homodimers and heterodimers. Interacts with TPL. In terms of tissue distribution, highly expressed in the whole plant.

The protein resides in the nucleus. In terms of biological role, aux/IAA proteins are short-lived transcriptional factors that function as repressors of early auxin response genes at low auxin concentrations. Repression is thought to result from the interaction with auxin response factors (ARFs), proteins that bind to the auxin-responsive promoter element (AuxRE). Formation of heterodimers with ARF proteins may alter their ability to modulate early auxin response genes expression. This is Auxin-responsive protein IAA8 (IAA8) from Arabidopsis thaliana (Mouse-ear cress).